We begin with the raw amino-acid sequence, 391 residues long: Phosphoglycerate kinase (391 aa).

Residues 21–23, arginine 36, 59–62, arginine 113, and arginine 146 contribute to the substrate site; these read DLN and HLGR. Residues lysine 197, glutamate 319, and 345-348 contribute to the ATP site; that span reads GGDT.

This sequence belongs to the phosphoglycerate kinase family. Monomer.

It localises to the cytoplasm. The catalysed reaction is (2R)-3-phosphoglycerate + ATP = (2R)-3-phospho-glyceroyl phosphate + ADP. The protein operates within carbohydrate degradation; glycolysis; pyruvate from D-glyceraldehyde 3-phosphate: step 2/5. In Colwellia psychrerythraea (strain 34H / ATCC BAA-681) (Vibrio psychroerythus), this protein is Phosphoglycerate kinase.